The sequence spans 271 residues: Gasdermin bGSDM (271 aa).

Cysteine 7 is lipidated: S-palmitoyl cysteine. 4 beta stranded membrane-spanning segments follow: residues 74 to 90 (IAGT…GLSV), 102 to 120 (TLGV…FEFS), 168 to 185 (RINV…GLNL), and 194 to 210 (ANVK…TVSF).

Belongs to the bacterial gasdermin family. As to quaternary structure, monomer. In terms of assembly, forms large, homooligomeric ring-shaped pores when inserted in membranes. Post-translationally, palmitoylation helps stabilize the inactive state; may self palmitoylate. Palmitoylation plays a significant role in pore formation.

Its subcellular location is the cytoplasm. It is found in the cell inner membrane. With respect to regulation, the full-length protein before cleavage is inactive: intramolecular interactions between the N-terminal domain and the C-terminal region as well as the lipid modification, mediate autoinhibition. The pyroptosis-like-inducing activity is carried by the released N-terminal domain (Gasdermin bGSDM, N-terminus). In terms of biological role, involved in defense against bacteriophages. When this probable 4 gene operon (bGSDM-FE772_23060-FE772_23065-FE772_23070) is inserted into E.coli it provides nearly 100-fold protection against phages T5 and T6 and about 8-fold against phage T4. The operon without bGSDM no longer protects against phage. Cleavage of this precursor by its dedicated protease(s) releases the active moiety (gasdermin bGSDM, N-terminus) which inserts into membranes, forming pores and triggering cell death. Pore-forming protein that causes membrane permeabilization via a pyroptosis-like activity. Makes ring-like pores when released. The chain is Gasdermin bGSDM from Lysobacter enzymogenes.